The chain runs to 501 residues: DDB1- and CUL4-associated factor 12-like protein 1 (501 aa).

Positions 1-37 are enriched in polar residues; it reads MRQADSQTQPSPAEQETPQPAGPSNRSPPTMGPQQTG. Residues 1–67 form a disordered region; that stretch reads MRQADSQTQP…PAAPMATAGE (67 aa). 4 WD repeats span residues 185 to 225, 230 to 268, 298 to 337, and 384 to 423; these read PPSC…PVCL, GHRD…FNGS, PGNR…SRLL, and SREG…FLEE.

Belongs to the WD repeat DCAF12 family.

In Mus musculus (Mouse), this protein is DDB1- and CUL4-associated factor 12-like protein 1 (Dcaf12l1).